The primary structure comprises 365 residues: MSLEEKKTTESKEKDKALSLVLGQIERNFGRGSIMRLGDASRMKVETISTGALTLDLALGGGYPKGRVVEVYGPESSGKTTLTLHAIAEVQKNGGVAAFVDAEHALDPVYAASLGVDVENLLVSQPDTGEMALEIVDQLIRSSAVDLVVVDSVAALTPRAEIEGEMGDHVIGSQARLMSQAMRKITGNIGKSGCTVIFLNQLRLKIGVTYGNPETTTGGNALKFYASVRLDIRRIQTLKRGTEEYGIRAKVKVAKNKVAPPFRIAEFDILFGKGISTTGCLLDLAEETNIIIRRGAWYSYEGENIGQGRDNTIIWLDQNLEIRNKVESMVKEKLTEGTEVSSNSMKALNSNPANTIAVNDIKTVA.

73 to 80 (GPESSGKT) provides a ligand contact to ATP.

It belongs to the RecA family.

It localises to the cytoplasm. Can catalyze the hydrolysis of ATP in the presence of single-stranded DNA, the ATP-dependent uptake of single-stranded DNA by duplex DNA, and the ATP-dependent hybridization of homologous single-stranded DNAs. It interacts with LexA causing its activation and leading to its autocatalytic cleavage. This Prochlorococcus marinus (strain MIT 9301) protein is Protein RecA.